The primary structure comprises 582 residues: A-type ATP synthase subunit A 1 (582 aa).

An ATP-binding site is contributed by Gly231 to Thr238.

It belongs to the ATPase alpha/beta chains family. In terms of assembly, has multiple subunits with at least A(3), B(3), C, D, E, F, H, I and proteolipid K(x).

The protein localises to the cell membrane. It catalyses the reaction ATP + H2O + 4 H(+)(in) = ADP + phosphate + 5 H(+)(out). Component of the A-type ATP synthase that produces ATP from ADP in the presence of a proton gradient across the membrane. The A chain is the catalytic subunit. In Methanospirillum hungatei JF-1 (strain ATCC 27890 / DSM 864 / NBRC 100397 / JF-1), this protein is A-type ATP synthase subunit A 1.